The sequence spans 423 residues: MAGKVKWVTDIEKSVLINNFEKRGWVQVTENEDWNFYWMSVQTIRNVFSVEAGYRLSDDQIVNHFPNHYELTRKDLMVKNIKRYRKELEKEGSPLAEKDENGKYLYLDFVPVTYMLPADYNLFVEEFRKSPSSTWIMKPCGKAQGKGIFLINKLSQIKKWSRDSKTSSFVSQSNKEAYVISLYINNPLLIGGRKFDLRLYVLVSTYRPLRCYMYKLGFCRFCTVKYTPSTSELDNMFVHLTNVAIQKHGEDYNHIHGGKWTVSNLRLYLESTRGKEVTSKLFDEIHWIIVQSLKAVAPVMNNDKHCFECYGYDIIIDDKLKPWLIEVNASPSLTSSTANDRILKYNLINDTLNIAVPNGEIPDCKWNKSPPKEVLGNYEILYDEELAQGDGADRELRSRQGQSLGPRAGRSRDSGRAVLTTWK.

Residues 1–367 (MAGKVKWVTD…NGEIPDCKWN (367 aa)) enclose the TTL domain. Residues lysine 138, 144-145 (QG), 181-184 (SLYI), and 194-196 (KFD) each bind ATP. Residue glutamine 144 coordinates a protein. Arginine 220 contacts L-glutamate. An ATP-binding site is contributed by 241–242 (TN). An L-glutamate-binding site is contributed by lysine 259. Mg(2+) is bound by residues aspartate 313, glutamate 326, and asparagine 328. Residue lysine 344 participates in L-glutamate binding. The segment at 391-423 (GADRELRSRQGQSLGPRAGRSRDSGRAVLTTWK) is disordered.

The protein belongs to the tubulin polyglutamylase family. In terms of assembly, part of the neuronal tubulin polyglutamylase complex which contains TPGS1, TPGS2, TTLL1, LRRC49 and NICN1. Interacts with PCM1, CSTPP1 and LRRC49. The cofactor is Mg(2+). In terms of tissue distribution, expressed in a wide range of tissues. Has a stronger expression in heart, brain and testis.

The protein resides in the cytoplasm. Its subcellular location is the cytoskeleton. The protein localises to the cilium basal body. It localises to the cilium axoneme. It is found in the cell projection. The protein resides in the cilium. Its subcellular location is the flagellum. The catalysed reaction is (L-glutamyl)(n)-gamma-L-glutamyl-L-glutamyl-[protein] + L-glutamate + ATP = (L-glutamyl)(n+1)-gamma-L-glutamyl-L-glutamyl-[protein] + ADP + phosphate + H(+). In terms of biological role, catalytic subunit of a polyglutamylase complex which modifies tubulin, generating side chains of glutamate on the gamma-carboxyl group of specific glutamate residues within the C-terminal tail of tubulin. Probably involved in the side-chain elongation step of the polyglutamylation reaction rather than the initiation step. Modifies both alpha- and beta-tubulins with a preference for the alpha-tail. Unlike most polyglutamylases of the tubulin--tyrosine ligase family, only displays a catalytic activity when in complex with other proteins as it is most likely lacking domains important for autonomous activity. Part of the neuronal tubulin polyglutamylase complex. Mediates cilia and flagella polyglutamylation which is essential for their biogenesis and motility. Involved in respiratory motile cilia function through the regulation of beating asymmetry. Essential for sperm flagella biogenesis, motility and male fertility. Involved in KLF4 glutamylation which impedes its ubiquitination, thereby leading to somatic cell reprogramming, pluripotency maintenance and embryogenesis. The chain is Polyglutamylase complex subunit TTLL1 from Homo sapiens (Human).